Consider the following 531-residue polypeptide: Probable inactive beta-glucosidase 25 (531 aa).

The first 24 residues, 1 to 24, serve as a signal peptide directing secretion; the sequence is MALKAILFLGLFLVVIVSPITVYG. A beta-D-glucoside contacts are provided by residues Q53 and 202–203; that span reads NE. Catalysis depends on E203, which acts as the Proton donor. Residues C222 and C230 are joined by a disulfide bond. A beta-D-glucoside contacts are provided by residues F348 and 477–478; that span reads EW.

Belongs to the glycosyl hydrolase 1 family.

The protein is Probable inactive beta-glucosidase 25 of Arabidopsis thaliana (Mouse-ear cress).